We begin with the raw amino-acid sequence, 601 residues long: Glutathione-regulated potassium-efflux system protein KefB (601 aa).

13 helical membrane-spanning segments follow: residues 4-24 (ADLL…VPLA), 29-49 (IGAV…GLGF), 55-75 (EILH…GLEL), 87-107 (IFGV…GLLM), 111-131 (FLWQ…TAMA), 152-172 (VLLF…LLAG), 177-197 (HFDW…LIGG), 207-227 (FIAA…LVLS), 230-250 (LFMD…GVLL), 262-282 (AIDP…GMSL), 284-304 (LGVL…LVVI), 324-344 (MQFA…FSTA), and 356-376 (ALLL…MKGI). Residues 400-519 (KPQVIVVGFG…AGVTQFSRET (120 aa)) form the RCK N-terminal domain.

It belongs to the monovalent cation:proton antiporter 2 (CPA2) transporter (TC 2.A.37) family. KefB subfamily. As to quaternary structure, interacts with the regulatory subunit KefG.

The protein localises to the cell inner membrane. Functionally, pore-forming subunit of a potassium efflux system that confers protection against electrophiles. Catalyzes K(+)/H(+) antiport. This is Glutathione-regulated potassium-efflux system protein KefB from Salmonella paratyphi A (strain ATCC 9150 / SARB42).